We begin with the raw amino-acid sequence, 299 residues long: MSDAEQSNEPIATPRGQAALLGPVEVRALAEEFGVRPTKQLGQNFVHDANTVRRIVTTAGVTRDDVVLEVGPGLGSLTMALMDVVDRVIAVEIDPNLAARLPKTVAERAPELADRLTVVEADAMRVLPSQIPGEPTALVANLPYNVAVPVLLHLFASLPSLRTALVMVQAEVADRLAADPGSKIYGVPSVKANFFGEVRRAGAVGRNVFWPVPKVESGLVRIDRYAEPPWPMDEKHRKQVFAAIDAAFAQRRKTLRAALSGWAGSPAEAERRLLAAGIEPQTRGEMLDAAAFVRLAGGE.

The S-adenosyl-L-methionine site is built by N44, V46, G71, E92, D122, and N141.

Belongs to the class I-like SAM-binding methyltransferase superfamily. rRNA adenine N(6)-methyltransferase family. RsmA subfamily.

Its subcellular location is the cytoplasm. The enzyme catalyses adenosine(1518)/adenosine(1519) in 16S rRNA + 4 S-adenosyl-L-methionine = N(6)-dimethyladenosine(1518)/N(6)-dimethyladenosine(1519) in 16S rRNA + 4 S-adenosyl-L-homocysteine + 4 H(+). Functionally, specifically dimethylates two adjacent adenosines (A1518 and A1519) in the loop of a conserved hairpin near the 3'-end of 16S rRNA in the 30S particle. May play a critical role in biogenesis of 30S subunits. The polypeptide is Ribosomal RNA small subunit methyltransferase A (Rhodococcus erythropolis (strain PR4 / NBRC 100887)).